Reading from the N-terminus, the 89-residue chain is Small ribosomal subunit protein uS15 (89 aa).

The protein belongs to the universal ribosomal protein uS15 family. Part of the 30S ribosomal subunit. Forms a bridge to the 50S subunit in the 70S ribosome, contacting the 23S rRNA.

One of the primary rRNA binding proteins, it binds directly to 16S rRNA where it helps nucleate assembly of the platform of the 30S subunit by binding and bridging several RNA helices of the 16S rRNA. In terms of biological role, forms an intersubunit bridge (bridge B4) with the 23S rRNA of the 50S subunit in the ribosome. The chain is Small ribosomal subunit protein uS15 from Lacticaseibacillus casei (strain BL23) (Lactobacillus casei).